The primary structure comprises 259 residues: MLDSVASKPELAELLTLTKTEQILRLAQINVELEPLSAQERVKWALENLDGEFAVSSSFGIQAAVMLHLVTQEKPDIPIILTDTGYLFAETYRFIDELTEKLNLNLKVYRAEQSAQWQEARYGKLWEQGVEGIEKYNKINKVEPMRRALKELNVGTWFSGLRREQSKSRAGLPILSIQNGVFKFLPVIDWTNKDVHYYLEQHGLTYHPLWEEGYLSVGDTHTTRKWEPGMSEEETRFFGLKRECGLHEDDGNEQDGSGI.

Cysteine 244 acts as the Nucleophile; cysteine thiosulfonate intermediate in catalysis.

This sequence belongs to the PAPS reductase family. CysH subfamily.

It localises to the cytoplasm. It catalyses the reaction [thioredoxin]-disulfide + sulfite + adenosine 3',5'-bisphosphate + 2 H(+) = [thioredoxin]-dithiol + 3'-phosphoadenylyl sulfate. Its pathway is sulfur metabolism; hydrogen sulfide biosynthesis; sulfite from sulfate: step 3/3. Its function is as follows. Catalyzes the formation of sulfite from phosphoadenosine 5'-phosphosulfate (PAPS) using thioredoxin as an electron donor. This chain is Phosphoadenosine 5'-phosphosulfate reductase, found in Vibrio parahaemolyticus serotype O3:K6 (strain RIMD 2210633).